Here is a 1861-residue protein sequence, read N- to C-terminus: Polyketide synthase 2 (1861 aa).

The Ketosynthase family 3 (KS3) domain maps to 109–525; that stretch reads DSKIAIIGMS…GGNSALLLED (417 aa). Catalysis depends on for beta-ketoacyl synthase activity residues Cys264, His399, and His441. The interval 626–931 is malonyl-CoA:ACP transacylase (MAT) domain; the sequence is GFVFSGQGAQ…PSLHRKDDGW (306 aa). The For acyl/malonyl transferase activity role is filled by Ser716. Residues 1008–1312 form a product template (PT) domain region; the sequence is TSSVQKVIQQ…VFGGMTVLPP (305 aa). The N-terminal hotdog fold stretch occupies residues 1012–1146; it reads QKVIQQTDGP…CILRFADPKS (135 aa). Residues 1012–1318 form the PKS/mFAS DH domain; it reads QKVIQQTDGP…VLPPRRGADA (307 aa). His1045 (proton acceptor; for dehydratase activity) is an active-site residue. The interval 1174–1318 is C-terminal hotdog fold; it reads DSLLSKGIVY…VLPPRRGADA (145 aa). The active-site Proton donor; for dehydratase activity is the Asp1232. A Carrier 1 domain is found at 1356–1433; the sequence is SPQSGAIHRI…ELRLFLAADQ (78 aa). Residue Ser1393 is modified to O-(pantetheine 4'-phosphoryl)serine. Residues 1441 to 1470 form a disordered region; that stretch reads CESSNGQHTPQTSDKGSGTLTAQKPDHDTD. A compositionally biased stretch (polar residues) spans 1442–1462; the sequence is ESSNGQHTPQTSDKGSGTLTA. The 75-residue stretch at 1472-1546 folds into the Carrier 2 domain; sequence EMTLNRVCAI…SLQKTLRGTE (75 aa). O-(pantetheine 4'-phosphoryl)serine is present on Ser1506. The thioesterase (TE) domain stretch occupies residues 1582–1855; it reads ASAPHATSIL…IIEMSNLIGD (274 aa). The active-site For thioesterase activity is the Ser1685.

In terms of biological role, polyketide synthase; part of the Pks2 gene cluster that mediates the formation of infectious structures (appressoria), enabling these fungi to kill insects faster. The product of the Pks2 gene cluster is different from the one of Pks1 and has still not been identified. The protein is Polyketide synthase 2 of Metarhizium acridum (strain CQMa 102).